An 80-amino-acid polypeptide reads, in one-letter code: MQDRKNRAGGFRKRKKVCFFTQNKFTHIDFKDTELLKRFITERGKILPRRVTGTSAKWQRPLAVAIKRARHMALLPFVKE.

It belongs to the bacterial ribosomal protein bS18 family. Part of the 30S ribosomal subunit. Forms a tight heterodimer with protein bS6.

Its function is as follows. Binds as a heterodimer with protein bS6 to the central domain of the 16S rRNA, where it helps stabilize the platform of the 30S subunit. The protein is Small ribosomal subunit protein bS18 of Acholeplasma laidlawii (strain PG-8A).